Here is a 449-residue protein sequence, read N- to C-terminus: UDP-N-acetylmuramoylalanine--D-glutamate ligase (449 aa).

ATP is bound at residue 119–125 (GTNGKTT).

The protein belongs to the MurCDEF family.

It localises to the cytoplasm. It carries out the reaction UDP-N-acetyl-alpha-D-muramoyl-L-alanine + D-glutamate + ATP = UDP-N-acetyl-alpha-D-muramoyl-L-alanyl-D-glutamate + ADP + phosphate + H(+). Its pathway is cell wall biogenesis; peptidoglycan biosynthesis. Its function is as follows. Cell wall formation. Catalyzes the addition of glutamate to the nucleotide precursor UDP-N-acetylmuramoyl-L-alanine (UMA). The protein is UDP-N-acetylmuramoylalanine--D-glutamate ligase of Lactococcus lactis subsp. cremoris (strain MG1363).